Here is a 537-residue protein sequence, read N- to C-terminus: MFKREEIIEMANKDFEKAWIETKDLIKAKKVNESYPRIKPVFGKTHPVNDTIENLRQAYLRMGFEEYINPVIVDERDIYKQFGPEAMAVLDRCFYLAGLPRPDVGLSDEKISQIEKLGIKVSEHKESLQKILHGYKKGTLDGDDLVLEISNALEISSEMGLKILEEVFPEFKDLTAVSSKLTLRSHMTSGWFLTVSDLMNKKPLPFKLFSIDRCFRREQKEDKSHLMTYHSASCAIAGEGVDINDGKAIAEGLLSQFGFTNFKFIPDEKKSKYYTPETQTEVYAYHPKLKEWLEVATFGVYSPVALSKYGIDVPVMNLGLGVERLAMISGNFADVREMVYPQFYEHKLDDRAVASMVKLDKVPVMDEIYDLTKELIDSCVKNKDLKSPCELTIEKTFSFGKTKKNVKINIFEKEEGKNLLGPSILNEIYVYDGNVIGIPESFDGVKEEFKEFLEKGKSEGVATSIRYIDALCFKLTSKLEEAIVTNTSEFKVKVPIVRSLSDINLKIDDIALKQIMSKNKVIDVRGPVFLNVEVKIE.

Substrate is bound by residues 186-188 (HMT), 231-233 (SAS), 273-274 (YY), and Asn317.

Belongs to the class-II aminoacyl-tRNA synthetase family. O-phosphoseryl-tRNA(Cys) synthetase subfamily. Homotetramer. Interacts with SepCysS.

It carries out the reaction tRNA(Cys) + O-phospho-L-serine + ATP = O-phospho-L-seryl-tRNA(Cys) + AMP + diphosphate. Its function is as follows. Catalyzes the attachment of O-phosphoserine (Sep) to tRNA(Cys). This chain is O-phosphoserine--tRNA(Cys) ligase, found in Methanococcus maripaludis (strain C7 / ATCC BAA-1331).